The primary structure comprises 485 residues: Chromosomal replication initiator protein DnaA (485 aa).

Positions 1–74 (MEKSKNIWSL…ILTNNGYDNV (74 aa)) are domain I, interacts with DnaA modulators. Residues 74 to 140 (VTIVFTNQSP…EEEPKNFKNP (67 aa)) are domain II. The segment at 141-357 (FLKKRYTFEN…AAVTKLKAYI (217 aa)) is domain III, AAA+ region. ATP-binding residues include Gly185, Gly187, Lys188, and Thr189. Residues 358 to 485 (DLDNIEIDID…TELMNKIKKN (128 aa)) form a domain IV, binds dsDNA region.

It belongs to the DnaA family. As to quaternary structure, oligomerizes as a right-handed, spiral filament on DNA at oriC.

Its subcellular location is the cytoplasm. Its function is as follows. Plays an essential role in the initiation and regulation of chromosomal replication. ATP-DnaA binds to the origin of replication (oriC) to initiate formation of the DNA replication initiation complex once per cell cycle. Binds the DnaA box (a 9 base pair repeat at the origin) and separates the double-stranded (ds)DNA. Forms a right-handed helical filament on oriC DNA; dsDNA binds to the exterior of the filament while single-stranded (ss)DNA is stabiized in the filament's interior. The ATP-DnaA-oriC complex binds and stabilizes one strand of the AT-rich DNA unwinding element (DUE), permitting loading of DNA polymerase. After initiation quickly degrades to an ADP-DnaA complex that is not apt for DNA replication. Binds acidic phospholipids. The protein is Chromosomal replication initiator protein DnaA of Borreliella afzelii (strain PKo) (Borrelia afzelii).